The primary structure comprises 73 residues: Aldehyde dehydrogenase (73 aa).

Belongs to the aldehyde dehydrogenase family.

It carries out the reaction an aldehyde + NAD(+) + H2O = a carboxylate + NADH + 2 H(+). The protein operates within alcohol metabolism; ethanol degradation; acetate from ethanol: step 2/2. In Geobacillus stearothermophilus (Bacillus stearothermophilus), this protein is Aldehyde dehydrogenase.